The following is a 450-amino-acid chain: NAD-specific glutamate dehydrogenase (450 aa).

Residues lysine 90, glutamine 111, and lysine 114 each contribute to the substrate site. Residue lysine 126 is the Proton donor of the active site. Position 165 (glycine 165) interacts with substrate. NAD(+) contacts are provided by threonine 210 and asparagine 241. Position 381 (serine 381) interacts with substrate.

Belongs to the Glu/Leu/Phe/Val dehydrogenases family. In terms of assembly, homohexamer.

The catalysed reaction is L-glutamate + NAD(+) + H2O = 2-oxoglutarate + NH4(+) + NADH + H(+). Its pathway is amino-acid degradation; L-glutamate degradation via hydroxyglutarate pathway; crotonoyl-CoA from L-glutamate: step 1/5. This chain is NAD-specific glutamate dehydrogenase (gdh), found in Clostridium symbiosum (Bacteroides symbiosus).